The chain runs to 142 residues: Phenylalanine ammonia-lyase (142 aa).

Lys-66, Glu-94, and Asn-97 together coordinate (E)-cinnamate.

The protein belongs to the PAL/histidase family. In terms of assembly, homotetramer. In terms of processing, contains an active site 4-methylidene-imidazol-5-one (MIO), which is formed autocatalytically by cyclization and dehydration of residues Ala-Ser-Gly.

Its subcellular location is the cytoplasm. It catalyses the reaction L-phenylalanine = (E)-cinnamate + NH4(+). It functions in the pathway phenylpropanoid metabolism; trans-cinnamate biosynthesis; trans-cinnamate from L-phenylalanine: step 1/1. Catalyzes the non-oxidative deamination of L-phenylalanine to form trans-cinnamic acid and a free ammonium ion. Facilitates the commitment step in phenylpropanoid pathways that produce secondary metabolites such as lignins, coumarins and flavonoids. The polypeptide is Phenylalanine ammonia-lyase (palA) (Agaricus bisporus (White button mushroom)).